We begin with the raw amino-acid sequence, 269 residues long: Gap junction gamma-3 protein (269 aa).

Residues 1-33 (MLLLELPIKCRMCGRFLRQLLAQESQHSTPVGR) are Extracellular-facing. A helical membrane pass occupies residues 34-54 (FLLPMLMGFRLLILVSSGPGV). Residues 55 to 86 (FGNDENEFICHLGQPGCKTICYDVFRPLSPLR) are Cytoplasmic-facing. The chain crosses the membrane as a helical span at residues 87 to 107 (FWAFQVILMAVPSAIYVAFTL). Residues 108–145 (YHVIGYWEVPGKENKEQETQISKGDHSKDVSGAKSLKL) are Extracellular-facing. Residues 146 to 166 (LWAYVAHLGVRLALEGAALGV) form a helical membrane-spanning segment. At 167–205 (QYNLYGFKMSSTFICREDPCIGSTTCFQSHPSEKTIFLN) the chain is on the cytoplasmic side. Residues 206-226 (IMFGISGACFLFIFLELALLG) form a helical membrane-spanning segment. The Extracellular portion of the chain corresponds to 227-269 (LGRFWRIYKHKLSFLKKLPTSESSVRSKDTTDELSVVEAKEPF). Ser261 carries the phosphoserine modification.

Belongs to the connexin family. Gamma-type subfamily. A connexon is composed of a hexamer of connexins. CNS specific. Expression is restricted to brain, spinal cord, and sciatic nerve.

Its subcellular location is the cell membrane. The protein resides in the cell junction. It is found in the gap junction. One gap junction consists of a cluster of closely packed pairs of transmembrane channels, the connexons, through which materials of low MW diffuse from one cell to a neighboring cell. The protein is Gap junction gamma-3 protein (Gjc3) of Mus musculus (Mouse).